Here is a 458-residue protein sequence, read N- to C-terminus: Ammonium transporter Rh type B (458 aa).

The Cytoplasmic segment spans residues 1 to 11 (MTDAATNMRLK). The chain crosses the membrane as a helical span at residues 12 to 32 (LPITCFILEIILIILFGTLVQ). The Extracellular portion of the chain corresponds to 33–58 (YDYETDAKEWHNTSHQDYENDFYFRY). Asparagine 44 is a glycosylation site (N-linked (GlcNAc...) asparagine). The helical transmembrane segment at 59-79 (PSFQDVHVMIFVGFGFLMTFL) threads the bilayer. The Cytoplasmic portion of the chain corresponds to 80-83 (QRYG). A helical membrane pass occupies residues 84 to 104 (FGSVGFNFLIAAFSLQWATLM). Topologically, residues 105–121 (QGFFHGMHGGKIHIGVE) are extracellular. The helical transmembrane segment at 122 to 142 (SMINADFCTGSVLISFGAVLG) threads the bilayer. Over 143-151 (KTSPIQLLT) the chain is Cytoplasmic. The helical transmembrane segment at 152–172 (MAIFEVTLFAVNEFILLSLLG) threads the bilayer. The Extracellular segment spans residues 173–176 (TKDA). Residues 177–197 (GGSMTIHTFGAYFGLMVTRIL) traverse the membrane as a helical segment. Over 198–216 (YRPNLDKSKHRNSSVYHSD) the chain is Cytoplasmic. The helical transmembrane segment at 217–237 (LFAMIGTVYLWMFWPSFNSAI) threads the bilayer. Over 238 to 247 (TAHGDDQHRT) the chain is Extracellular. A helical transmembrane segment spans residues 248 to 270 (ALNTYYSLAACTLATYGMSAITS). At 271 to 274 (HDGK) the chain is on the cytoplasmic side. The helical transmembrane segment at 275–295 (LDMVHIQNAALAGGVAVGTAG) threads the bilayer. At 296-298 (EMM) the chain is on the extracellular side. The helical transmembrane segment at 299-319 (LTPFGSMIVGFMAGIISVLGF) threads the bilayer. The Cytoplasmic portion of the chain corresponds to 320–340 (KFLSPILEDKLKIQDTCGIHN). Residues 341–361 (LHGMPGVLGAIVGAVTAALAT) traverse the membrane as a helical segment. Residues 362-391 (TDVYGQGMADVFPAVADGSVNATKQGGIQA) are Extracellular-facing. The helical transmembrane segment at 392–412 (LSLAITLGIAVLGGLIVGFVL) threads the bilayer. At 413 to 458 (KLPVFGTPPDTLCFEDSVYWEVPGSESPEEGELTSVKPEETEHLNS) the chain is on the cytoplasmic side. Residues 436-458 (GSESPEEGELTSVKPEETEHLNS) form a disordered region. Over residues 449-458 (KPEETEHLNS) the composition is skewed to basic and acidic residues.

It belongs to the ammonium transporter (TC 2.A.49) family. Rh subfamily. Specifically expressed in the gill by pavement cells (at protein level).

It is found in the apicolateral cell membrane. The protein resides in the cytoplasmic vesicle membrane. In terms of biological role, functions as an ammonia transporter. May play a role in the elimination of ammonia in the gill. The sequence is that of Ammonium transporter Rh type B (rhbg) from Takifugu rubripes (Japanese pufferfish).